A 461-amino-acid chain; its full sequence is Nuclear distribution protein PAC1 (461 aa).

In terms of domain architecture, LisH spans 9-41 (QAEELHKAIIAYLSANNLSSSATALRTELGLAE). Residues 61 to 88 (TSVVRLQKKIMDLESRNNALQSELDNAT) adopt a coiled-coil conformation. WD repeat units follow at residues 114-155 (SHQN…RTIK), 157-197 (HTRP…KNIR), 201-248 (GHDH…CLKT), 251-290 (GHTAWIRDVYPSLDGRYLLSTGDDSTVRLWDLSVTNPENR), 295-355 (GHDH…LKTL), 357-396 (GHDNWVRALVFHPGGRYLLSVSDDKTLRCWDLEQDGKCVK), 401-444 (VHER…VRIR), and 446-461 (VIATGSVDMKLRIFAN).

Belongs to the WD repeat LIS1/nudF family. As to quaternary structure, self-associates. Interacts with NDL1 and dynein.

The protein resides in the cytoplasm. It localises to the cytoskeleton. It is found in the spindle pole. Its function is as follows. Positively regulates the activity of the minus-end directed microtubule motor protein dynein. May enhance dynein-mediated microtubule sliding by targeting dynein to the microtubule plus end. Required for nuclear migration during vegetative growth as well as development. Required for retrograde early endosome (EE) transport from the hyphal tip. Required for localization of dynein to the mitotic spindle poles. Recruits additional proteins to the dynein complex at SPBs. The sequence is that of Nuclear distribution protein PAC1 from Pyricularia oryzae (strain 70-15 / ATCC MYA-4617 / FGSC 8958) (Rice blast fungus).